The primary structure comprises 516 residues: Gamma-aminobutyrate transaminase 1, mitochondrial (516 aa).

The N-terminal 47 residues, Met1–Phe47, are a transit peptide targeting the mitochondrion. The segment covering Arg45–Glu60 has biased composition (polar residues). The interval Arg45–Lys64 is disordered. Gly171–Ser172 is a binding site for pyridoxal 5'-phosphate. Position 204 (Tyr204) interacts with substrate. Asp311 serves as a coordination point for pyridoxal 5'-phosphate. Residue Lys340 coordinates substrate. Lys340 is subject to N6-(pyridoxal phosphate)lysine.

It belongs to the class-III pyridoxal-phosphate-dependent aminotransferase family.

It localises to the mitochondrion. The catalysed reaction is 4-aminobutanoate + pyruvate = succinate semialdehyde + L-alanine. It catalyses the reaction 4-aminobutanoate + glyoxylate = succinate semialdehyde + glycine. Its function is as follows. Transaminase that degrades gamma-amino butyric acid (GABA) and uses pyruvate as amino-group acceptor, but not 2-oxoglutarate. The chain is Gamma-aminobutyrate transaminase 1, mitochondrial from Oryza sativa subsp. indica (Rice).